Reading from the N-terminus, the 492-residue chain is Protein PAIR1 (492 aa).

Residues 166–186 (VDSVQSDVMQLNRAMKEASLD) adopt a coiled-coil conformation. The short motif at 479-483 (KRRRR) is the Nuclear localization signal element.

As to quaternary structure, interacts with CRC1. In terms of tissue distribution, expressed in reproductive organs, but not in vegetative organs.

Its subcellular location is the nucleus. Functionally, involved in spore formation. Plays an essential role in the establishment of homologous chromosome pairing in early meiosis. In Oryza sativa subsp. japonica (Rice), this protein is Protein PAIR1 (PAIR1).